Reading from the N-terminus, the 404-residue chain is Phosphopentomutase (404 aa).

Mn(2+) contacts are provided by Asp10, Asp303, His308, Asp344, His345, and His356.

This sequence belongs to the phosphopentomutase family. Mn(2+) serves as cofactor.

It is found in the cytoplasm. It carries out the reaction 2-deoxy-alpha-D-ribose 1-phosphate = 2-deoxy-D-ribose 5-phosphate. The catalysed reaction is alpha-D-ribose 1-phosphate = D-ribose 5-phosphate. It participates in carbohydrate degradation; 2-deoxy-D-ribose 1-phosphate degradation; D-glyceraldehyde 3-phosphate and acetaldehyde from 2-deoxy-alpha-D-ribose 1-phosphate: step 1/2. In terms of biological role, isomerase that catalyzes the conversion of deoxy-ribose 1-phosphate (dRib-1-P) and ribose 1-phosphate (Rib-1-P) to deoxy-ribose 5-phosphate (dRib-5-P) and ribose 5-phosphate (Rib-5-P), respectively. The chain is Phosphopentomutase from Shewanella baltica (strain OS155 / ATCC BAA-1091).